The chain runs to 458 residues: Argininosuccinate lyase (458 aa).

Belongs to the lyase 1 family. Argininosuccinate lyase subfamily.

It is found in the cytoplasm. The catalysed reaction is 2-(N(omega)-L-arginino)succinate = fumarate + L-arginine. It functions in the pathway amino-acid biosynthesis; L-arginine biosynthesis; L-arginine from L-ornithine and carbamoyl phosphate: step 3/3. The polypeptide is Argininosuccinate lyase (Haemophilus ducreyi (strain 35000HP / ATCC 700724)).